A 310-amino-acid polypeptide reads, in one-letter code: Ribosomal RNA small subunit methyltransferase H (310 aa).

Residues 32-34, Asp52, Ala83, Asp100, and Gln107 contribute to the S-adenosyl-L-methionine site; that span reads GGH.

Belongs to the methyltransferase superfamily. RsmH family.

It localises to the cytoplasm. It carries out the reaction cytidine(1402) in 16S rRNA + S-adenosyl-L-methionine = N(4)-methylcytidine(1402) in 16S rRNA + S-adenosyl-L-homocysteine + H(+). Its function is as follows. Specifically methylates the N4 position of cytidine in position 1402 (C1402) of 16S rRNA. In Geobacillus sp. (strain WCH70), this protein is Ribosomal RNA small subunit methyltransferase H.